Here is a 514-residue protein sequence, read N- to C-terminus: Probable lipid II flippase MurJ (514 aa).

Helical transmembrane passes span 3-23, 25-45, 92-112, 130-150, 157-177, 186-206, 245-265, 271-291, 315-335, 354-374, 386-406, 409-429, 448-468, and 481-501; these read ILKS…FGFF, DVLI…FIAF, ILVL…IIFI, LLKI…CSSI, FFIP…FSFF, IISL…YQFP, ISLI…ISWI, LIEF…FTSF, LILS…LVII, LELY…VSAF, ISIL…FYFQ, GLAL…YWKL, LLIA…FIPS, and LFTI…FLGI.

Belongs to the MurJ/MviN family.

It localises to the cell inner membrane. It functions in the pathway cell wall biogenesis; peptidoglycan biosynthesis. In terms of biological role, involved in peptidoglycan biosynthesis. Transports lipid-linked peptidoglycan precursors from the inner to the outer leaflet of the cytoplasmic membrane. The polypeptide is Probable lipid II flippase MurJ (Buchnera aphidicola subsp. Schizaphis graminum (strain Sg)).